The chain runs to 270 residues: Orotidine 5'-phosphate decarboxylase (270 aa).

Catalysis depends on Lys-95, which acts as the Proton donor.

It belongs to the OMP decarboxylase family. Type 2 subfamily.

It catalyses the reaction orotidine 5'-phosphate + H(+) = UMP + CO2. It participates in pyrimidine metabolism; UMP biosynthesis via de novo pathway; UMP from orotate: step 2/2. The protein is Orotidine 5'-phosphate decarboxylase of Azoarcus sp. (strain BH72).